A 267-amino-acid polypeptide reads, in one-letter code: Phosphate import ATP-binding protein PstB 2 (267 aa).

An ABC transporter domain is found at Leu21–Val262. Gly53 to Ser60 contributes to the ATP binding site.

This sequence belongs to the ABC transporter superfamily. Phosphate importer (TC 3.A.1.7) family. The complex is composed of two ATP-binding proteins (PstB), two transmembrane proteins (PstC and PstA) and a solute-binding protein (PstS).

It is found in the cell membrane. The enzyme catalyses phosphate(out) + ATP + H2O = ADP + 2 phosphate(in) + H(+). Its function is as follows. Part of the ABC transporter complex PstSACB involved in phosphate import. Responsible for energy coupling to the transport system. The protein is Phosphate import ATP-binding protein PstB 2 of Streptococcus agalactiae serotype Ia (strain ATCC 27591 / A909 / CDC SS700).